A 198-amino-acid chain; its full sequence is Recombination protein RecR (198 aa).

A C4-type zinc finger spans residues 57–72; it reads CSVCGNLTDDDPCLIC. The 96-residue stretch at 80 to 175 folds into the Toprim domain; sequence SVILVVEDSK…KVTRLARGLA (96 aa).

The protein belongs to the RecR family.

Its function is as follows. May play a role in DNA repair. It seems to be involved in an RecBC-independent recombinational process of DNA repair. It may act with RecF and RecO. This Streptococcus agalactiae serotype Ia (strain ATCC 27591 / A909 / CDC SS700) protein is Recombination protein RecR.